A 165-amino-acid chain; its full sequence is ER membrane protein complex subunit 5 (165 aa).

Residues 1-3 (MAP) are Cytoplasmic-facing. Residues 4 to 22 (SLWKGLVGIGLFALAHAAF) traverse the membrane as a helical segment. Residues 23-77 (SAAQHYFPSSGIKWKRKCEFLQSSSFQDKIFRSMYYVYDRSYMRLTEKEDESLPI) lie on the Lumenal side of the membrane. A helical membrane pass occupies residues 78 to 97 (DIVLQTLLAFAVTCYGIVHI). Over 98–165 (AGEFKDMDAT…KLRKLESLRR (68 aa)) the chain is Cytoplasmic. Ser-154 is modified (phosphoserine).

This sequence belongs to the membrane magnesium transporter (TC 1.A.67) family. Component of the ER membrane protein complex (EMC).

The protein localises to the endoplasmic reticulum membrane. Its subcellular location is the golgi apparatus membrane. It localises to the early endosome membrane. Its function is as follows. Part of the endoplasmic reticulum membrane protein complex (EMC) that enables the energy-independent insertion into endoplasmic reticulum membranes of newly synthesized membrane proteins. Preferentially accommodates proteins with transmembrane domains that are weakly hydrophobic or contain destabilizing features such as charged and aromatic residues. Involved in the cotranslational insertion of multi-pass membrane proteins in which stop-transfer membrane-anchor sequences become ER membrane spanning helices. It is also required for the post-translational insertion of tail-anchored/TA proteins in endoplasmic reticulum membranes. By mediating the proper cotranslational insertion of N-terminal transmembrane domains in an N-exo topology, with translocated N-terminus in the lumen of the ER, controls the topology of multi-pass membrane proteins like the G protein-coupled receptors. By regulating the insertion of various proteins in membranes, it is indirectly involved in many cellular processes. May be involved in Mg(2+) transport. This chain is ER membrane protein complex subunit 5, found in Bos taurus (Bovine).